The sequence spans 215 residues: Nascent polypeptide-associated complex subunit alpha (215 aa).

Residues Met1–Ser81 form a disordered region. The segment covering Val9 to Glu28 has biased composition (polar residues). Positions Ser29–Asp42 are enriched in acidic residues. At Ser43 the chain carries Phosphoserine; by ILK1. Residues Thr44–Ala57 show a composition bias toward low complexity. The tract at residues Gln69–Met80 is required for DNA-binding. An NAC-A/B domain is found at Ser70–Ala135. The tract at residues Arg93–Lys108 is RNA/DNA-binding. The residue at position 132 (Ser132) is a Phosphoserine. An N6-acetyllysine; alternate modification is found at Lys142. Residue Lys142 forms a Glycyl lysine isopeptide (Lys-Gly) (interchain with G-Cter in SUMO2); alternate linkage. Thr159 is modified (phosphothreonine; by GSK3-beta). Thr161 carries the post-translational modification Phosphothreonine. Residues Ser166, Ser186, Ser191, and Ser203 each carry the phosphoserine modification. A UBA domain is found at Val176–Leu213.

Belongs to the NAC-alpha family. Part of the nascent polypeptide-associated complex (NAC), which is a heterodimer of NACA and BTF3 (via NAC-A/B domains). NAC associates with ribosomes through the BTF3/NACB subunit and contacts the ribosomal protein L23, which is positioned near the exiting site. Both subunits can contact nascent polypeptide chains. NACA may also form homodimers, and only this form binds DNA. Interacts with TBP and JUN. Phosphorylation of Ser-43 by ILK during cell adhesion may promote nuclear localization. Phosphorylation of Thr-159 by GSK3B may promote proteasome mediated degradation.

The protein resides in the cytoplasm. The protein localises to the nucleus. Prevents inappropriate targeting of non-secretory polypeptides to the endoplasmic reticulum (ER). Binds to nascent polypeptide chains as they emerge from the ribosome and blocks their interaction with the signal recognition particle (SRP), which normally targets nascent secretory peptides to the ER. Also reduces the inherent affinity of ribosomes for protein translocation sites in the ER membrane (M sites). May act as a specific coactivator for JUN, binding to DNA and stabilizing the interaction of JUN homodimers with target gene promoters. This is Nascent polypeptide-associated complex subunit alpha (NACA) from Bos taurus (Bovine).